A 343-amino-acid chain; its full sequence is ABC transporter riboflavin-binding protein RfuA (343 aa).

An N-terminal signal peptide occupies residues 1-19 (MNGAVCVLSALIAVFTCFS). Residue Cys20 is the site of N-palmitoyl cysteine attachment. Cys20 carries the S-diacylglycerol cysteine lipid modification. Residues 43–46 (SPVY), Asp124, Gln140, Tyr176, Trp208, and Asp255 contribute to the riboflavin site.

This sequence belongs to the BMP lipoprotein family. In terms of assembly, monomer in solution. The complex is probably composed of two ATP-binding proteins (RfuB), two transmembrane proteins (RfuC and RfuD) and a solute-binding protein (RfuA).

It localises to the cell inner membrane. Its function is as follows. Probably part of the ABC transporter complex RfuABCD involved in riboflavin import. Binds riboflavin. The protein is ABC transporter riboflavin-binding protein RfuA of Treponema pallidum (strain Nichols).